We begin with the raw amino-acid sequence, 60 residues long: U-actitoxin-Avd12b (60 aa).

The N-terminal stretch at 1–6 is a signal peptide; it reads SKEGMS. Residues 7–12 constitute a propeptide that is removed on maturation; it reads YEEPEN. The EGF-like domain occupies 14–56; the sequence is EGVACTGQYAESFCLNGGTCRYIQSIGEYYCICVGDYTGHRCE. 3 disulfide bridges follow: Cys18–Cys33, Cys27–Cys44, and Cys46–Cys55.

This sequence belongs to the EGF domain peptide family.

It is found in the secreted. The protein localises to the nematocyst. In terms of biological role, has both toxic and EGF activity. Its EGF activity consists of rounding cells (morphological change) and inducing tyrosine phosphorylation of the EGFR in A431 cells, but with a lower potency that human EGF. This Anemonia viridis (Snakelocks anemone) protein is U-actitoxin-Avd12b.